Consider the following 62-residue polypeptide: U10-buthitoxin-Hj1a (62 aa).

The signal sequence occupies residues 1 to 22 (MQKIFIILVLFCILKFNVDVEG). Intrachain disulfides connect Cys-28–Cys-46, Cys-33–Cys-59, and Cys-37–Cys-61.

Belongs to the short scorpion toxin superfamily. Potassium channel inhibitor family. Alpha-KTx 23 subfamily. Expressed by the venom gland.

The protein resides in the secreted. In terms of biological role, may block potassium channels. The polypeptide is U10-buthitoxin-Hj1a (Hottentotta judaicus (Black scorpion)).